The following is a 457-amino-acid chain: Phosphomethylpyrimidine synthase (457 aa).

Substrate-binding positions include asparagine 88, methionine 117, tyrosine 146, histidine 182, 204–206 (SRG), 245–248 (DACR), and glutamate 284. A Zn(2+)-binding site is contributed by histidine 288. Tyrosine 311 contributes to the substrate binding site. Histidine 352 contacts Zn(2+). 3 residues coordinate [4Fe-4S] cluster: cysteine 428, cysteine 431, and cysteine 435.

It belongs to the ThiC family. It depends on [4Fe-4S] cluster as a cofactor.

The enzyme catalyses 5-amino-1-(5-phospho-beta-D-ribosyl)imidazole + S-adenosyl-L-methionine = 4-amino-2-methyl-5-(phosphooxymethyl)pyrimidine + CO + 5'-deoxyadenosine + formate + L-methionine + 3 H(+). It participates in cofactor biosynthesis; thiamine diphosphate biosynthesis. Functionally, catalyzes the synthesis of the hydroxymethylpyrimidine phosphate (HMP-P) moiety of thiamine from aminoimidazole ribotide (AIR) in a radical S-adenosyl-L-methionine (SAM)-dependent reaction. The sequence is that of Phosphomethylpyrimidine synthase from Clostridium tetani (strain Massachusetts / E88).